A 282-amino-acid polypeptide reads, in one-letter code: Tumor necrosis factor ligand superfamily member 6 (282 aa).

Topologically, residues 1–82 (MQQPFNYPYP…KKKRDHNAGL (82 aa)) are cytoplasmic. Positions 30–73 (FPCPASVPGRPGQRRPPPPPPPPPPPPTLLPSRPLPPLPPPSLK) are disordered. The span at 43–71 (RRPPPPPPPPPPPPTLLPSRPLPPLPPPS) shows a compositional bias: pro residues. The helical; Signal-anchor for type II membrane protein transmembrane segment at 83 to 103 (CLLVMFFMVLVALVGLGLGMF) threads the bilayer. Over 104 to 282 (QLFHLQKELT…SKTFFGLYKL (179 aa)) the chain is Extracellular. The segment covering 119 to 132 (ASQRHTESSLEKQI) has biased composition (basic and acidic residues). The segment at 119–140 (ASQRHTESSLEKQIGHPNLPSE) is disordered. The THD domain occupies 146-282 (KVAHLTGKPN…SKTFFGLYKL (137 aa)). A glycan (N-linked (GlcNAc...) asparagine) is linked at Asn185. Cys203 and Cys234 are oxidised to a cystine. N-linked (GlcNAc...) asparagine glycans are attached at residues Asn251 and Asn261.

Belongs to the tumor necrosis factor family. As to quaternary structure, homotrimer. Interacts with ARHGAP9, BAIAP2L1, BTK, CACNB3, CACNB4, CRK, DLG2, DNMBP, DOCK4, EPS8L3, FGR, FYB1, FYN, HCK, ITK, ITSN2, KALRN, LYN, MACC1, MIA, MPP4, MYO15A, NCF1, NCK1, NCK2, NCKIPSD, OSTF1, PIK3R1, PSTPIP1, RIMBP3C, SAMSN1, SH3GL3, SH3PXD2B, SH3PXD2A, SH3RF2, SKAP2, SNX33, SNX9, SORBS3, SPTA1, SRC, SRGAP1, SRGAP2, SRGAP3, TEC, TJP3 and YES1. In terms of processing, the soluble form derives from the membrane form by proteolytic processing. The membrane-bound form undergoes two successive intramembrane proteolytic cleavages. The first one is processed by ADAM10 producing an N-terminal fragment, which lacks the receptor-binding extracellular domain. This ADAM10-processed FasL (FasL APL) remnant form is still membrane anchored and further processed by SPPL2A that liberates the FasL intracellular domain (FasL ICD). FasL shedding by ADAM10 is a prerequisite for subsequent intramembrane cleavage by SPPL2A in T-cells. Post-translationally, phosphorylated by FGR on tyrosine residues; this is required for ubiquitination and subsequent internalization. N-glycosylated. Glycosylation enhances apoptotic activity. In terms of processing, monoubiquitinated.

It localises to the cell membrane. The protein resides in the cytoplasmic vesicle lumen. The protein localises to the lysosome lumen. It is found in the secreted. Its subcellular location is the nucleus. Functionally, cytokine that binds to TNFRSF6/FAS, a receptor that transduces the apoptotic signal into cells. Involved in cytotoxic T-cell-mediated apoptosis, natural killer cell-mediated apoptosis and in T-cell development. Initiates fratricidal/suicidal activation-induced cell death (AICD) in antigen-activated T-cells contributing to the termination of immune responses. TNFRSF6/FAS-mediated apoptosis also has a role in the induction of peripheral tolerance. Binds to TNFRSF6B/DcR3, a decoy receptor that blocks apoptosis. In terms of biological role, induces FAS-mediated activation of NF-kappa-B, initiating non-apoptotic signaling pathways. Can induce apoptosis but does not appear to be essential for this process. Cytoplasmic form induces gene transcription inhibition. This chain is Tumor necrosis factor ligand superfamily member 6 (FASLG), found in Sus scrofa (Pig).